A 490-amino-acid polypeptide reads, in one-letter code: Sushi domain-containing protein 4 (490 aa).

A disordered region spans residues 1–21 (MYHGMNPSNGDGFLEQQQQQQ). The N-terminal stretch at 1–41 (MYHGMNPSNGDGFLEQQQQQQQPQSPQRLLAVILWFQLALC) is a signal peptide. Residues 42–319 (FGPAQLTGGF…PSTHETLLTT (278 aa)) are Extracellular-facing. 4 consecutive Sushi domains span residues 55–119 (QVCA…ICVQ), 120–179 (EDCR…ICQG), 178–239 (QGCL…RCLA), and 241–304 (EVCP…YCIK). Intrachain disulfides connect Cys57-Cys99, Cys85-Cys117, Cys122-Cys165, Cys147-Cys177, Cys180-Cys224, Cys210-Cys237, Cys243-Cys289, and Cys274-Cys302. Asn104 and Asn134 each carry an N-linked (GlcNAc...) asparagine glycan. Asn192 carries an N-linked (GlcNAc...) asparagine glycan. The chain crosses the membrane as a helical span at residues 320-340 (WKIVAFTATSVLLVLLLVILA). Over 341 to 490 (RMFQTKFKAH…DEIPLMEEDP (150 aa)) the chain is Cytoplasmic. Positions 401 to 490 (GCPLPVDDQS…DEIPLMEEDP (90 aa)) are disordered. Over residues 430–456 (CDSVSGSSELLQSLYSPPRCQESTHPA) the composition is skewed to polar residues. Over residues 479–490 (IADEIPLMEEDP) the composition is skewed to acidic residues.

In terms of tissue distribution, isoform 3 is the predominant isoform in all tissues except cortex, cerebellum, kidney, and breast. Isoform 1 is found primarily in the esophagus and the brain.

Its subcellular location is the membrane. The protein localises to the secreted. Its function is as follows. Acts as a complement inhibitor by disrupting the formation of the classical C3 convertase. Isoform 3 inhibits the classical complement pathway, while membrane-bound isoform 1 inhibits deposition of C3b via both the classical and alternative complement pathways. This is Sushi domain-containing protein 4 (SUSD4) from Homo sapiens (Human).